Reading from the N-terminus, the 391-residue chain is Septation protein etd1 (391 aa).

Positions 49 to 68 (MKSYGSDITPRRPKQLGLPK) are disordered.

Its function is as follows. Involved in septation. The chain is Septation protein etd1 (etd1) from Schizosaccharomyces pombe (strain 972 / ATCC 24843) (Fission yeast).